The primary structure comprises 135 residues: Small ribosomal subunit protein uS11 (135 aa).

The protein belongs to the universal ribosomal protein uS11 family. Part of the 30S ribosomal subunit. Interacts with proteins S7 and S18. Binds to IF-3.

Its function is as follows. Located on the platform of the 30S subunit, it bridges several disparate RNA helices of the 16S rRNA. Forms part of the Shine-Dalgarno cleft in the 70S ribosome. The polypeptide is Small ribosomal subunit protein uS11 (Polynucleobacter asymbioticus (strain DSM 18221 / CIP 109841 / QLW-P1DMWA-1) (Polynucleobacter necessarius subsp. asymbioticus)).